The chain runs to 258 residues: Indole-3-glycerol phosphate synthase (258 aa).

Belongs to the TrpC family.

The enzyme catalyses 1-(2-carboxyphenylamino)-1-deoxy-D-ribulose 5-phosphate + H(+) = (1S,2R)-1-C-(indol-3-yl)glycerol 3-phosphate + CO2 + H2O. The protein operates within amino-acid biosynthesis; L-tryptophan biosynthesis; L-tryptophan from chorismate: step 4/5. In Nautilia profundicola (strain ATCC BAA-1463 / DSM 18972 / AmH), this protein is Indole-3-glycerol phosphate synthase.